A 228-amino-acid polypeptide reads, in one-letter code: Upstream activation factor subunit UAF30 (228 aa).

The DEK-C domain occupies 1–56 (MAELNDYSTMIDILLSDMDLETVTTKKVRMALKEVYAIDVESQGKAINKLIRKHLD). Over residues 89–111 (SKRSSGEEKNDSETKGTHVEKKK) the composition is skewed to basic and acidic residues. The disordered stretch occupies residues 89–118 (SKRSSGEEKNDSETKGTHVEKKKGTVSKSP). Positions 119-195 (ISTRKVTLSK…HKILASHMTE (77 aa)) constitute an SWIB/MDM2 domain. The disordered stretch occupies residues 209 to 228 (VRRKEKPIVSDSEQSDTKGI). Ser218, Ser220, and Ser223 each carry phosphoserine.

As to quaternary structure, component of the UAF (upstream activation factor) complex which consists of UAF30, RRN5, RRN9, RRN10, and histones H3 and H4.

The protein localises to the nucleus. It is found in the nucleolus. In terms of biological role, nonessential component of the UAF (upstream activation factor) complex which interacts with the upstream element of the RNA polymerase I promoter and forms a stable preinitiation complex. Together with SPT15/TBP UAF seems to stimulate basal transcription to a fully activated level. UAF30 seems to play a role in silencing transcription by RNA polymerase II. This Saccharomyces cerevisiae (strain ATCC 204508 / S288c) (Baker's yeast) protein is Upstream activation factor subunit UAF30 (UAF30).